A 701-amino-acid chain; its full sequence is Type 3 secretion system secretin (701 aa).

Positions 1–21 (MRKALMWLPLLLIGLSPATWA) are cleaved as a signal peptide. The span at 229-238 (RGNGLAGGGS) shows a compositional bias: gly residues. The interval 229–252 (RGNGLAGGGSPDTPSLPMSSSGLD) is disordered. Polar residues predominate over residues 240–252 (DTPSLPMSSSGLD).

This sequence belongs to the bacterial secretin family. T3SS SctC subfamily. The core secretion machinery of the T3SS is composed of approximately 20 different proteins, including cytoplasmic components, a base, an export apparatus and a needle. This subunit is part of the base, which anchors the injectisome in the bacterial cell envelope. Forms a stable homooligomeric complex.

The protein resides in the cell outer membrane. Its function is as follows. Component of the type III secretion system (T3SS), also called injectisome, which is used to inject bacterial effector proteins into eukaryotic host cells. Forms a ring-shaped multimeric structure with an apparent central pore in the outer membrane. Involved in the secretion of a proteinaceous elicitor of the hypersensitivity response in plants. This Pseudomonas syringae pv. syringae protein is Type 3 secretion system secretin.